Reading from the N-terminus, the 354-residue chain is UDP-3-O-acylglucosamine N-acyltransferase (354 aa).

H257 serves as the catalytic Proton acceptor. Residues 335–354 form a disordered region; the sequence is AQQVSKSKLRGRNPGGKQND.

It belongs to the transferase hexapeptide repeat family. LpxD subfamily. In terms of assembly, homotrimer.

The enzyme catalyses a UDP-3-O-[(3R)-3-hydroxyacyl]-alpha-D-glucosamine + a (3R)-hydroxyacyl-[ACP] = a UDP-2-N,3-O-bis[(3R)-3-hydroxyacyl]-alpha-D-glucosamine + holo-[ACP] + H(+). It participates in bacterial outer membrane biogenesis; LPS lipid A biosynthesis. Its function is as follows. Catalyzes the N-acylation of UDP-3-O-acylglucosamine using 3-hydroxyacyl-ACP as the acyl donor. Is involved in the biosynthesis of lipid A, a phosphorylated glycolipid that anchors the lipopolysaccharide to the outer membrane of the cell. This chain is UDP-3-O-acylglucosamine N-acyltransferase, found in Rhizobium etli (strain ATCC 51251 / DSM 11541 / JCM 21823 / NBRC 15573 / CFN 42).